The sequence spans 293 residues: MTMRQCAIYGKGGIGKSTTTQNLVAALAEMGKKVMIVGCDPKADSTRLILHAKAQNTIMEMAAEVGSVEDLELEDVLQIGYGDVRCAESGGPEPGVGCAGRGVITAINFLEEEGAYEEDLDFVFYDVLGDVVCGGFAMPIRENKAQEIYIVCSGEMMAMYAANNISKGIVKYAKSGKVRLGGLICNSRKTDREDELIIALAEKLGTQMIHFVPRDNIVQRAEIRRMTVIEYDPTCQQANEYRQLAQKIVNNTKKVVPTPCTMDELESLLMEFGIMEEEDTSIIGKTAAEENAA.

Position 10–17 (10–17) interacts with ATP; sequence GKGGIGKS. Cys98 serves as a coordination point for [4Fe-4S] cluster. At Arg101 the chain carries ADP-ribosylarginine; by dinitrogenase reductase ADP-ribosyltransferase. Cys133 is a binding site for [4Fe-4S] cluster.

It belongs to the NifH/BchL/ChlL family. In terms of assembly, homodimer. The cofactor is [4Fe-4S] cluster. Post-translationally, the reversible ADP-ribosylation of Arg-101 inactivates the nitrogenase reductase and regulates nitrogenase activity.

It catalyses the reaction N2 + 8 reduced [2Fe-2S]-[ferredoxin] + 16 ATP + 16 H2O = H2 + 8 oxidized [2Fe-2S]-[ferredoxin] + 2 NH4(+) + 16 ADP + 16 phosphate + 6 H(+). The key enzymatic reactions in nitrogen fixation are catalyzed by the nitrogenase complex, which has 2 components: the iron protein and the molybdenum-iron protein. The chain is Nitrogenase iron protein from Klebsiella pneumoniae (strain 342).